The primary structure comprises 171 residues: Phosphopantetheine adenylyltransferase (171 aa).

Substrate is bound at residue T9. ATP is bound by residues 9–10 (TF) and H17. Substrate is bound by residues K41, L73, and R87. ATP is bound by residues 88-90 (GLR), E98, and 123-129 (YQFISGT).

Belongs to the bacterial CoaD family. Homohexamer. Requires Mg(2+) as cofactor.

The protein resides in the cytoplasm. It carries out the reaction (R)-4'-phosphopantetheine + ATP + H(+) = 3'-dephospho-CoA + diphosphate. It functions in the pathway cofactor biosynthesis; coenzyme A biosynthesis; CoA from (R)-pantothenate: step 4/5. Functionally, reversibly transfers an adenylyl group from ATP to 4'-phosphopantetheine, yielding dephospho-CoA (dPCoA) and pyrophosphate. The polypeptide is Phosphopantetheine adenylyltransferase (Paraburkholderia phytofirmans (strain DSM 17436 / LMG 22146 / PsJN) (Burkholderia phytofirmans)).